The sequence spans 871 residues: Protein argonaute-2 (871 aa).

Residues 232–351 form the PAZ domain; that stretch reads PVIEFMCEVL…LPLEVCNIVA (120 aa). Interaction with guide RNA regions lie at residues 314 to 319 and 536 to 578; these read YFKDRH and GKTP…LCLK. Residues 529-830 enclose the Piwi domain; it reads LVVVILPGKT…VAFRARYHLV (302 aa). The interaction with GW182 family members stretch occupies residues 599–602; that stretch reads FQQP. Asp609 contributes to the a divalent metal cation binding site. The segment at 662-672 is interaction with GW182 family members; sequence LIQFYKSTRFK. Asp681 is a binding site for a divalent metal cation. 3 interaction with guide RNA regions span residues 721-722, 765-773, and 802-824; these read KR, HAGIQGTSR, and YVRC…VAFR. His819 contributes to the a divalent metal cation binding site. A disordered region spans residues 834–856; that stretch reads HDSAEGSHTSGQSNGRDQQALAK. Positions 839–850 are enriched in polar residues; that stretch reads GSHTSGQSNGRD.

The protein belongs to the argonaute family. Ago subfamily. In terms of assembly, component of the RISC loading complex (RLC), or micro-RNA (miRNA) loading complex (miRLC), which is composed of dicer1, ago2 and tarbp2. Note that the trimeric RLC/miRLC is also referred to as RISC. Requires Mg(2+) as cofactor. It depends on Mn(2+) as a cofactor.

The protein localises to the cytoplasm. It is found in the P-body. It carries out the reaction Endonucleolytic cleavage to 5'-phosphomonoester.. Functionally, required for RNA-mediated gene silencing (RNAi) by the RNA-induced silencing complex (RISC). The 'minimal RISC' appears to include ago2 bound to a short guide RNA such as a microRNA (miRNA) or short interfering RNA (siRNA). These guide RNAs direct RISC to complementary mRNAs that are targets for RISC-mediated gene silencing. The precise mechanism of gene silencing depends on the degree of complementarity between the miRNA or siRNA and its target. Binding of RISC to a perfectly complementary mRNA generally results in silencing due to endonucleolytic cleavage of the mRNA specifically by ago2. Binding of RISC to a partially complementary mRNA results in silencing through inhibition of translation, and this is independent of endonuclease activity. The inhibition of translational initiation leads to the accumulation of the affected mRNA in cytoplasmic processing bodies (P-bodies), where mRNA degradation may subsequently occur. The protein is Protein argonaute-2 (ago2) of Xenopus tropicalis (Western clawed frog).